Here is an 802-residue protein sequence, read N- to C-terminus: Elongation factor G, mitochondrial (802 aa).

A mitochondrion-targeting transit peptide spans 1-24 (MRYPSLARLPRRALSGLARAPVRL). The tr-type G domain maps to 100–387 (SRVRNIGIAA…GVIDYLPNPS (288 aa)). GTP contacts are provided by residues 109–116 (AHIDSGKT), 185–189 (DTPGH), and 239–242 (NKMD).

Belongs to the TRAFAC class translation factor GTPase superfamily. Classic translation factor GTPase family. EF-G/EF-2 subfamily.

The protein localises to the mitochondrion. Its pathway is protein biosynthesis; polypeptide chain elongation. Mitochondrial GTPase that catalyzes the GTP-dependent ribosomal translocation step during translation elongation. During this step, the ribosome changes from the pre-translocational (PRE) to the post-translocational (POST) state as the newly formed A-site-bound peptidyl-tRNA and P-site-bound deacylated tRNA move to the P and E sites, respectively. Catalyzes the coordinated movement of the two tRNA molecules, the mRNA and conformational changes in the ribosome. This is Elongation factor G, mitochondrial (mef1) from Aspergillus terreus (strain NIH 2624 / FGSC A1156).